Consider the following 248-residue polypeptide: Cytochrome c oxidase subunit 2 (248 aa).

An N-terminal signal peptide occupies residues Met-1–Asn-12. Residues Asp-13 to Asn-39 are Mitochondrial intermembrane-facing. A helical membrane pass occupies residues Ile-40–Asp-61. The Mitochondrial matrix portion of the chain corresponds to Tyr-62–Glu-79. The chain crosses the membrane as a helical span at residues Ile-80–Cys-104. Over Asp-105–Gln-248 the chain is Mitochondrial intermembrane. Residues His-183, Cys-218, Glu-220, Cys-222, His-226, and Met-229 each coordinate Cu cation. Glu-220 serves as a coordination point for Mg(2+).

This sequence belongs to the cytochrome c oxidase subunit 2 family. In terms of assembly, component of the cytochrome c oxidase (complex IV, CIV), a multisubunit enzyme composed of a catalytic core of 3 subunits and several supernumerary subunits. The complex exists as a monomer or a dimer and forms supercomplexes (SCs) in the inner mitochondrial membrane with ubiquinol-cytochrome c oxidoreductase (cytochrome b-c1 complex, complex III, CIII). It depends on Cu cation as a cofactor. In terms of processing, the signal sequence of COX2 is processed by IMP1.

It localises to the mitochondrion inner membrane. The catalysed reaction is 4 Fe(II)-[cytochrome c] + O2 + 8 H(+)(in) = 4 Fe(III)-[cytochrome c] + 2 H2O + 4 H(+)(out). In terms of biological role, component of the cytochrome c oxidase, the last enzyme in the mitochondrial electron transport chain which drives oxidative phosphorylation. The respiratory chain contains 3 multisubunit complexes succinate dehydrogenase (complex II, CII), ubiquinol-cytochrome c oxidoreductase (cytochrome b-c1 complex, complex III, CIII) and cytochrome c oxidase (complex IV, CIV), that cooperate to transfer electrons derived from NADH and succinate to molecular oxygen, creating an electrochemical gradient over the inner membrane that drives transmembrane transport and the ATP synthase. Cytochrome c oxidase is the component of the respiratory chain that catalyzes the reduction of oxygen to water. Electrons originating from reduced cytochrome c in the intermembrane space (IMS) are transferred via the dinuclear copper A center (CU(A)) of subunit 2 and heme A of subunit 1 to the active site in subunit 1, a binuclear center (BNC) formed by heme A3 and copper B (CU(B)). The BNC reduces molecular oxygen to 2 water molecules using 4 electrons from cytochrome c in the IMS and 4 protons from the mitochondrial matrix. This Eremothecium gossypii (strain ATCC 10895 / CBS 109.51 / FGSC 9923 / NRRL Y-1056) (Yeast) protein is Cytochrome c oxidase subunit 2 (COX2).